The chain runs to 635 residues: DNA mismatch repair protein MutL (635 aa).

Residues glycine 359–tyrosine 399 form a disordered region. Low complexity predominate over residues alanine 364–alanine 377. The span at valine 378–tyrosine 399 shows a compositional bias: basic and acidic residues.

The protein belongs to the DNA mismatch repair MutL/HexB family.

In terms of biological role, this protein is involved in the repair of mismatches in DNA. It is required for dam-dependent methyl-directed DNA mismatch repair. May act as a 'molecular matchmaker', a protein that promotes the formation of a stable complex between two or more DNA-binding proteins in an ATP-dependent manner without itself being part of a final effector complex. The polypeptide is DNA mismatch repair protein MutL (Yersinia pestis bv. Antiqua (strain Antiqua)).